The following is a 231-amino-acid chain: Ribose-5-phosphate isomerase A (231 aa).

Substrate-binding positions include 40-43 (TGST), 93-96 (DGAD), and 106-109 (KGGG). The active-site Proton acceptor is glutamate 115. A substrate-binding site is contributed by lysine 133.

The protein belongs to the ribose 5-phosphate isomerase family. Homodimer.

It catalyses the reaction aldehydo-D-ribose 5-phosphate = D-ribulose 5-phosphate. It functions in the pathway carbohydrate degradation; pentose phosphate pathway; D-ribose 5-phosphate from D-ribulose 5-phosphate (non-oxidative stage): step 1/1. Catalyzes the reversible conversion of ribose-5-phosphate to ribulose 5-phosphate. The chain is Ribose-5-phosphate isomerase A from Escherichia coli O1:K1 / APEC.